The following is a 350-amino-acid chain: Tetraacyldisaccharide 4'-kinase (350 aa).

49 to 56 (TTGGTGKT) serves as a coordination point for ATP.

The protein belongs to the LpxK family.

The enzyme catalyses a lipid A disaccharide + ATP = a lipid IVA + ADP + H(+). Its pathway is glycolipid biosynthesis; lipid IV(A) biosynthesis; lipid IV(A) from (3R)-3-hydroxytetradecanoyl-[acyl-carrier-protein] and UDP-N-acetyl-alpha-D-glucosamine: step 6/6. In terms of biological role, transfers the gamma-phosphate of ATP to the 4'-position of a tetraacyldisaccharide 1-phosphate intermediate (termed DS-1-P) to form tetraacyldisaccharide 1,4'-bis-phosphate (lipid IVA). The protein is Tetraacyldisaccharide 4'-kinase of Chlorobaculum tepidum (strain ATCC 49652 / DSM 12025 / NBRC 103806 / TLS) (Chlorobium tepidum).